The sequence spans 210 residues: Large ribosomal subunit protein uL4 (210 aa).

The segment covering 44 to 54 (KRQGTASTLTR) has biased composition (polar residues). Positions 44-85 (KRQGTASTLTRSEVRGGGRKPYKQKGTGRARQGSIRTPLRPG) are disordered. The segment covering 60–71 (GGRKPYKQKGTG) has biased composition (basic residues).

It belongs to the universal ribosomal protein uL4 family. As to quaternary structure, part of the 50S ribosomal subunit.

One of the primary rRNA binding proteins, this protein initially binds near the 5'-end of the 23S rRNA. It is important during the early stages of 50S assembly. It makes multiple contacts with different domains of the 23S rRNA in the assembled 50S subunit and ribosome. Functionally, forms part of the polypeptide exit tunnel. The polypeptide is Large ribosomal subunit protein uL4 (Prochlorococcus marinus (strain MIT 9301)).